The sequence spans 502 residues: Cytochrome P450 81D1 (502 aa).

The chain crosses the membrane as a helical span at residues 6 to 26; it reads IRVVLYSIFSLIFLIISFKFL. Residue cysteine 440 participates in heme binding.

Belongs to the cytochrome P450 family. Heme is required as a cofactor.

Its subcellular location is the membrane. The protein is Cytochrome P450 81D1 (CYP81D1) of Arabidopsis thaliana (Mouse-ear cress).